The primary structure comprises 600 residues: ATP-dependent lipid A-core flippase (600 aa).

5 helical membrane-spanning segments follow: residues 28-48 (IMAVLGLITYGAVDAAFIAFI), 80-100 (IMLMAPIAVILMFSLRGVANF), 182-202 (WKLSLCILVIGPIMGVVISVV), 267-287 (ISQPLIMVIGSFALAFVLYAA), and 295-315 (DLTAGTFAAILGAMLAMLQPI). Residues 28 to 327 (IMAVLGLITY…LTRVNAEFQR (300 aa)) enclose the ABC transmembrane type-1 domain. Positions 359–596 (LAFDNVTFAY…AGIYANLYQM (238 aa)) constitute an ABC transporter domain. 393-400 (GRSGSGKS) is an ATP binding site.

It belongs to the ABC transporter superfamily. Lipid exporter (TC 3.A.1.106) family. In terms of assembly, homodimer.

The protein resides in the cell inner membrane. It catalyses the reaction ATP + H2O + lipid A-core oligosaccharideSide 1 = ADP + phosphate + lipid A-core oligosaccharideSide 2.. Functionally, involved in lipopolysaccharide (LPS) biosynthesis. Translocates lipid A-core from the inner to the outer leaflet of the inner membrane. Transmembrane domains (TMD) form a pore in the inner membrane and the ATP-binding domain (NBD) is responsible for energy generation. The chain is ATP-dependent lipid A-core flippase from Shewanella frigidimarina (strain NCIMB 400).